The primary structure comprises 148 residues: Holo-[acyl-carrier-protein] synthase (148 aa).

Residues Asp-9 and Glu-63 each coordinate Mg(2+).

This sequence belongs to the P-Pant transferase superfamily. AcpS family. Mg(2+) is required as a cofactor.

It localises to the cytoplasm. It catalyses the reaction apo-[ACP] + CoA = holo-[ACP] + adenosine 3',5'-bisphosphate + H(+). Functionally, transfers the 4'-phosphopantetheine moiety from coenzyme A to a Ser of acyl-carrier-protein. This Burkholderia cenocepacia (strain HI2424) protein is Holo-[acyl-carrier-protein] synthase.